A 78-amino-acid chain; its full sequence is UPF0335 protein RrIowa_0193 (78 aa).

This sequence belongs to the UPF0335 family.

This chain is UPF0335 protein RrIowa_0193, found in Rickettsia rickettsii (strain Iowa).